The following is a 478-amino-acid chain: Alpha-1,3-mannosyl-glycoprotein 4-beta-N-acetylglucosaminyltransferase C (478 aa).

Residues 1-25 (MLKFYQMKYIFQILDKMRCLRKRST) lie on the Cytoplasmic side of the membrane. The chain crosses the membrane as a helical; Signal-anchor for type II membrane protein span at residues 26-43 (VSFLGVLVVFLLFMNLYI). At 44 to 478 (EDSYVLEGDK…IIRSISIWTS (435 aa)) the chain is on the lumenal side. Asn84 and Asn215 each carry an N-linked (GlcNAc...) asparagine glycan.

Belongs to the glycosyltransferase 54 family. A divalent metal cation serves as cofactor.

The protein resides in the golgi apparatus membrane. It carries out the reaction N(4)-{beta-D-GlcNAc-(1-&gt;2)-alpha-D-Man-(1-&gt;3)-[beta-D-GlcNAc-(1-&gt;2)-alpha-D-Man-(1-&gt;6)]-beta-D-Man-(1-&gt;4)-beta-D-GlcNAc-(1-&gt;4)-beta-D-GlcNAc}-L-asparaginyl-[protein] + UDP-N-acetyl-alpha-D-glucosamine = N(4)-{beta-D-GlcNAc-(1-&gt;2)-[beta-D-GlcNAc-(1-&gt;4)]-alpha-D-Man-(1-&gt;3)-[beta-D-GlcNAc-(1-&gt;2)-alpha-D-Man-(1-&gt;6)]-beta-D-Man-(1-&gt;4)-beta-D-GlcNAc-(1-&gt;4)-beta-D-GlcNAc}-L-asparaginyl-[protein] + UDP + H(+). It participates in protein modification; protein glycosylation. Functionally, glycosyltransferase that participates in the transfer of N-acetylglucosamine (GlcNAc) to the core mannose residues of N-linked glycans. Catalyzes the formation of the GlcNAcbeta1-4 branch on the GlcNAcbeta1-2Manalpha1-3 arm of the core structure of N-linked glycans. Essential for the production of tri- and tetra-antennary N-linked sugar chains. Does not catalyze the transfer of GlcNAc to the Manalpha1-6 arm to form GlcNAcBeta1-4Manalpha1-6 linkage ('GnT-VI' activity). The chain is Alpha-1,3-mannosyl-glycoprotein 4-beta-N-acetylglucosaminyltransferase C (Mgat4c) from Mus musculus (Mouse).